A 335-amino-acid polypeptide reads, in one-letter code: Ferrochelatase (335 aa).

Fe cation-binding residues include H207 and E288.

It belongs to the ferrochelatase family.

It localises to the cytoplasm. The catalysed reaction is heme b + 2 H(+) = protoporphyrin IX + Fe(2+). It participates in porphyrin-containing compound metabolism; protoheme biosynthesis; protoheme from protoporphyrin-IX: step 1/1. Catalyzes the ferrous insertion into protoporphyrin IX. The chain is Ferrochelatase from Helicobacter pylori (strain G27).